The sequence spans 333 residues: uncharacterized protein (333 aa).

One can recognise a Fe/B12 periplasmic-binding domain in the interval 45–318; sequence NVIVSDSMFI…EYVKIIHPKI (274 aa).

This is an uncharacterized protein from Methanocaldococcus jannaschii (strain ATCC 43067 / DSM 2661 / JAL-1 / JCM 10045 / NBRC 100440) (Methanococcus jannaschii).